Reading from the N-terminus, the 397-residue chain is Riboflavin biosynthesis protein RibBA (397 aa).

Residues 1–199 (MFHRIEEALE…IEDLIAYRRH (199 aa)) form a DHBP synthase region. D-ribulose 5-phosphate-binding positions include 26–27 (RE), Asp31, 138–142 (RAGHT), and Glu162. Glu27 lines the Mg(2+) pocket. His141 lines the Mg(2+) pocket. The tract at residues 200 to 397 (HETLVTREVE…VNKLGHLLNL (198 aa)) is GTP cyclohydrolase II. A GTP-binding site is contributed by 250–254 (RVHSE). Zn(2+)-binding residues include Cys255, Cys266, and Cys268. GTP is bound by residues Gln271, 293 to 295 (EGR), and Thr315. Residue Asp327 is the Proton acceptor; for GTP cyclohydrolase activity of the active site. Arg329 serves as the catalytic Nucleophile; for GTP cyclohydrolase activity. GTP contacts are provided by Thr350 and Lys355.

In the N-terminal section; belongs to the DHBP synthase family. It in the C-terminal section; belongs to the GTP cyclohydrolase II family. It depends on Mg(2+) as a cofactor. The cofactor is Mn(2+). Requires Zn(2+) as cofactor.

It catalyses the reaction D-ribulose 5-phosphate = (2S)-2-hydroxy-3-oxobutyl phosphate + formate + H(+). The catalysed reaction is GTP + 4 H2O = 2,5-diamino-6-hydroxy-4-(5-phosphoribosylamino)-pyrimidine + formate + 2 phosphate + 3 H(+). It participates in cofactor biosynthesis; riboflavin biosynthesis; 2-hydroxy-3-oxobutyl phosphate from D-ribulose 5-phosphate: step 1/1. It functions in the pathway cofactor biosynthesis; riboflavin biosynthesis; 5-amino-6-(D-ribitylamino)uracil from GTP: step 1/4. Its function is as follows. Catalyzes the conversion of D-ribulose 5-phosphate to formate and 3,4-dihydroxy-2-butanone 4-phosphate. In terms of biological role, catalyzes the conversion of GTP to 2,5-diamino-6-ribosylamino-4(3H)-pyrimidinone 5'-phosphate (DARP), formate and pyrophosphate. The polypeptide is Riboflavin biosynthesis protein RibBA (Bacillus cereus (strain B4264)).